Reading from the N-terminus, the 465-residue chain is GTPase Der (465 aa).

EngA-type G domains follow at residues 3-167 (PLVA…PEEG) and 179-352 (IRIA…ESAN). GTP-binding positions include 9 to 16 (GRPNVGKS), 57 to 61 (DTGGI), 119 to 122 (NKID), 185 to 192 (GRPNVGKS), 232 to 236 (DTAGL), and 297 to 300 (NKWD). The 85-residue stretch at 353 to 437 (KTFTTSEVNK…PVSFIFREGT (85 aa)) folds into the KH-like domain.

This sequence belongs to the TRAFAC class TrmE-Era-EngA-EngB-Septin-like GTPase superfamily. EngA (Der) GTPase family. Associates with the 50S ribosomal subunit.

Functionally, GTPase that plays an essential role in the late steps of ribosome biogenesis. The chain is GTPase Der from Stenotrophomonas maltophilia (strain R551-3).